Reading from the N-terminus, the 471-residue chain is (13S,14R)-1,13-dihydroxy-N-methylcanadine 13-O-acetyltransferase AT1 (471 aa).

The protein belongs to the plant acyltransferase family.

It catalyses the reaction (13S,14R)-1,13-dihydroxy-N-methylcanadine + acetyl-CoA = (13S,14R)-13-O-acetyl-1-hydroxy-N-methylcanadine + CoA. Its pathway is alkaloid biosynthesis. Its function is as follows. Acetyltransferase involved in the biosynthesis of the benzylisoquinoline alkaloid noscapine. Converts (13S,14R)-1,13-dihydroxy-N-methylcanadine to (13S,14R)-13-O-acetyl-1-hydroxy-N-methylcanadine. This is (13S,14R)-1,13-dihydroxy-N-methylcanadine 13-O-acetyltransferase AT1 from Papaver somniferum (Opium poppy).